A 141-amino-acid chain; its full sequence is Hemoglobin subunit alpha-3 (141 aa).

Position 1 is an N-acetylserine (serine 1). Residues 1–141 (SLSASEKAAV…VSAVLTSKYR (141 aa)) form the Globin domain. Residue histidine 58 coordinates O2. Histidine 87 contacts heme b.

The protein belongs to the globin family. Heterotetramer of two alpha chains and two beta chains. In terms of tissue distribution, red blood cells.

Its function is as follows. This is a tadpole (larval) alpha chain. This chain is Hemoglobin subunit alpha-3, found in Aquarana catesbeiana (American bullfrog).